A 269-amino-acid polypeptide reads, in one-letter code: uncharacterized protein (269 aa).

ATP contacts are provided by residues G12–S19 and G130–S137.

It to M.jannaschii MJ0578.

This is an uncharacterized protein from Methanocaldococcus jannaschii (strain ATCC 43067 / DSM 2661 / JAL-1 / JCM 10045 / NBRC 100440) (Methanococcus jannaschii).